The sequence spans 411 residues: Arginine deiminase (411 aa).

C401 (amidino-cysteine intermediate) is an active-site residue.

It belongs to the arginine deiminase family. Post-translationally, glycosylated.

It localises to the cytoplasm. It carries out the reaction L-arginine + H2O = L-citrulline + NH4(+). It participates in amino-acid degradation; L-arginine degradation via ADI pathway; carbamoyl phosphate from L-arginine: step 1/2. The polypeptide is Arginine deiminase (arcA) (Streptococcus pyogenes serotype M1).